A 191-amino-acid chain; its full sequence is Thioredoxin F-type, chloroplastic (191 aa).

Residues 68–190 enclose the Thioredoxin domain; that stretch reads KASLETAVGA…LVAAIEAARS (123 aa). Catalysis depends on nucleophile residues Cys115 and Cys118. Residues Cys115 and Cys118 are joined by a disulfide bond.

The protein belongs to the thioredoxin family. Plant F-type subfamily. Forms a complex with heterodimeric ferredoxin-thioredoxin reductase (FTR) and ferredoxin.

The protein localises to the plastid. The protein resides in the chloroplast. Its function is as follows. Participates in various redox reactions through the reversible oxidation of the active center dithiol to a disulfide. The F form is known to activate a number of enzymes of the photosynthetic carbon cycle. In Mesembryanthemum crystallinum (Common ice plant), this protein is Thioredoxin F-type, chloroplastic.